The chain runs to 1179 residues: RecBCD enzyme subunit RecB (1179 aa).

Residues 1-859 (MVYSDTKTSK…IIQNGKCMNY (859 aa)) are DNA-binding and helicase activity, interacts with RecC. The UvrD-like helicase ATP-binding domain maps to 18 to 459 (NIMKKKLNIF…YYLDTNWRSS (442 aa)). 39 to 46 (ASAGTGKT) serves as a coordination point for ATP. Residues 485–755 (EPILSSSKNL…RIITIHKSKG (271 aa)) form the UvrD-like helicase C-terminal domain. The tract at residues 910–1179 (YSQITSFTKI…KLTKLILQKK (270 aa)) is nuclease activity, interacts with RecD and RecA. The Mg(2+) site is built by His962, Asp1073, and Asp1086. The For nuclease activity role is filled by Asp1086.

Belongs to the helicase family. UvrD subfamily. As to quaternary structure, heterotrimer of RecB, RecC and RecD. All subunits contribute to DNA-binding. Interacts with RecA. Mg(2+) serves as cofactor.

It carries out the reaction Exonucleolytic cleavage (in the presence of ATP) in either 5'- to 3'- or 3'- to 5'-direction to yield 5'-phosphooligonucleotides.. The catalysed reaction is Couples ATP hydrolysis with the unwinding of duplex DNA by translocating in the 3'-5' direction.. It catalyses the reaction ATP + H2O = ADP + phosphate + H(+). In terms of biological role, a helicase/nuclease that prepares dsDNA breaks (DSB) for recombinational DNA repair. Binds to DSBs and unwinds DNA via a highly rapid and processive ATP-dependent bidirectional helicase activity. Unwinds dsDNA until it encounters a Chi (crossover hotspot instigator) sequence from the 3' direction. Cuts ssDNA a few nucleotides 3' to the Chi site. The properties and activities of the enzyme are changed at Chi. The Chi-altered holoenzyme produces a long 3'-ssDNA overhang and facilitates RecA-binding to the ssDNA for homologous DNA recombination and repair. Holoenzyme degrades any linearized DNA that is unable to undergo homologous recombination. In the holoenzyme this subunit contributes ATPase, 3'-5' helicase, exonuclease activity and loads RecA onto ssDNA. The sequence is that of RecBCD enzyme subunit RecB from Buchnera aphidicola subsp. Schizaphis graminum (strain Sg).